Reading from the N-terminus, the 169-residue chain is Cell division inhibitor SulA (169 aa).

The ftsZ binding stretch occupies residues 106 to 112 (ALRTGNY). Residues 162–169 (KIHSNLYH) form a lon protease binding region.

It belongs to the SulA family. In terms of assembly, interacts with FtsZ. In terms of processing, is rapidly cleaved and degraded by the Lon protease once DNA damage is repaired.

Component of the SOS system and an inhibitor of cell division. Accumulation of SulA causes rapid cessation of cell division and the appearance of long, non-septate filaments. In the presence of GTP, binds a polymerization-competent form of FtsZ in a 1:1 ratio, thus inhibiting FtsZ polymerization and therefore preventing it from participating in the assembly of the Z ring. This mechanism prevents the premature segregation of damaged DNA to daughter cells during cell division. The protein is Cell division inhibitor SulA of Shigella boydii serotype 18 (strain CDC 3083-94 / BS512).